Consider the following 306-residue polypeptide: Non-specific ribonucleoside hydrolase RihC (306 aa).

His-235 is a catalytic residue.

It belongs to the IUNH family. RihC subfamily.

In terms of biological role, hydrolyzes both purine and pyrimidine ribonucleosides with a broad-substrate specificity. The chain is Non-specific ribonucleoside hydrolase RihC from Salmonella paratyphi B (strain ATCC BAA-1250 / SPB7).